A 688-amino-acid polypeptide reads, in one-letter code: Polyphosphate kinase (688 aa).

N45 contributes to the ATP binding site. The Mg(2+) site is built by R375 and R405. The region spanning 430-464 (PGLKIHAKLFLISRKENGEVVRYAHIGTGNFNEKT) is the PLD phosphodiesterase domain. The Phosphohistidine intermediate role is filled by H435. ATP is bound by residues Y468, R564, and H592.

Belongs to the polyphosphate kinase 1 (PPK1) family. It depends on Mg(2+) as a cofactor. Post-translationally, an intermediate of this reaction is the autophosphorylated ppk in which a phosphate is covalently linked to a histidine residue through a N-P bond.

The enzyme catalyses [phosphate](n) + ATP = [phosphate](n+1) + ADP. Catalyzes the reversible transfer of the terminal phosphate of ATP to form a long-chain polyphosphate (polyP). This is Polyphosphate kinase from Escherichia coli O6:H1 (strain CFT073 / ATCC 700928 / UPEC).